A 114-amino-acid polypeptide reads, in one-letter code: Non-specific lipid-transfer protein 2 (114 aa).

The signal sequence occupies residues 1-23 (MEMVNKIACFVLLCMVVVAPHAE). 4 disulfides stabilise this stretch: Cys-27–Cys-73, Cys-37–Cys-50, Cys-51–Cys-96, and Cys-71–Cys-110.

It belongs to the plant LTP family.

Its function is as follows. Plant non-specific lipid-transfer proteins transfer phospholipids as well as galactolipids across membranes. May play a role in wax or cutin deposition in the cell walls of expanding epidermal cells and certain secretory tissues. The polypeptide is Non-specific lipid-transfer protein 2 (LTP2) (Solanum pennellii (Tomato)).